The chain runs to 396 residues: Obg-like ATPase 1 (396 aa).

The 261-residue stretch at 23–283 folds into the OBG-type G domain; that stretch reads LKIGIVGLPN…MSAEEKQKYL (261 aa). 32 to 37 contacts ATP; it reads NVGKST. Ser-36 and Thr-56 together coordinate Mg(2+). An ATP-binding site is contributed by Leu-231. The short motif at 267 to 274 is the Nuclear export signal element; it reads LELKLQDM. In terms of domain architecture, TGS spans 304-387; sequence QLEYFFTAGP…EDGDIIFFKF (84 aa).

Belongs to the TRAFAC class OBG-HflX-like GTPase superfamily. OBG GTPase family. YchF/OLA1 subfamily. In terms of assembly, monomer. It depends on Mg(2+) as a cofactor.

The protein localises to the cytoplasm. It is found in the nucleus. It localises to the nucleolus. In terms of biological role, hydrolyzes ATP, and can also hydrolyze GTP with lower efficiency. Has lower affinity for GTP. The protein is Obg-like ATPase 1 of Gallus gallus (Chicken).